The primary structure comprises 530 residues: Vesicular acetylcholine transporter (530 aa).

Topologically, residues 1 to 33 (MEPTAPTGQARAAATKLSEAVGAALQEPQRQRR) are cytoplasmic. Residues 34–54 (LVLVIVCVALLLDNMLYMVIV) form a helical membrane-spanning segment. Residues 55-125 (PIVPDYIAHM…PTESEDVKIG (71 aa)) lie on the Lumenal, vesicle side of the membrane. 2 N-linked (GlcNAc...) asparagine glycosylation sites follow: asparagine 89 and asparagine 96. A helical membrane pass occupies residues 126 to 146 (VLFASKAILQLLVNPLSGPFI). Over 147-152 (DRMSYD) the chain is Cytoplasmic. The helical transmembrane segment at 153–173 (VPLLIGLGVMFASTVMFAFAE) threads the bilayer. At 174-182 (DYATLFAAR) the chain is on the lumenal, vesicle side. A helical transmembrane segment spans residues 183–203 (SLQGLGSAFADTSGIAMIADK). Over 204–213 (YPEEPERSRA) the chain is Cytoplasmic. A helical transmembrane segment spans residues 214 to 234 (LGVALAFISFGSLVAPPFGGI). The Lumenal, vesicle segment spans residues 235–242 (LYEFAGKR). The helical transmembrane segment at 243–263 (VPFLVLAAVSLFDALLLLAVA) threads the bilayer. Topologically, residues 264-289 (KPFSAAARARANLPVGTPIHRLMLDP) are cytoplasmic. A helical membrane pass occupies residues 290–310 (YIAVVAGALTTCNIPLAFLEP). The Lumenal, vesicle segment spans residues 311–325 (TIATWMKHTMAASEW). A helical membrane pass occupies residues 326-346 (EMGMVWLPAFVPHVLGVYLTV). Topologically, residues 347 to 356 (RLAARYPHLQ) are cytoplasmic. A helical transmembrane segment spans residues 357–377 (WLYGALGLAVIGVSSCVVPAC). Over 378–388 (RSFAPLVVSLC) the chain is Lumenal, vesicle. A helical transmembrane segment spans residues 389 to 409 (GLCFGIALVDTALLPTLAFLV). At 410-422 (DVRHVSVYGSVYA) the chain is on the cytoplasmic side. The chain crosses the membrane as a helical span at residues 423–443 (IADISYSVAYALGPIVAGHIV). At 444–447 (HSLG) the chain is on the lumenal, vesicle side. A helical transmembrane segment spans residues 448–468 (FEQLSLGMGLANLLYAPVLLL). The Cytoplasmic segment spans residues 469–530 (LRNVGLLTRS…EDDYNYYSRS (62 aa)). Residues 471 to 530 (NVGLLTRSRSERDVLLDEPPQGLYDAVRLREVQGKDGGEPCSPPGPFDGCEDDYNYYSRS) are mediates interaction with SEC14L1. Residues 504–530 (GKDGGEPCSPPGPFDGCEDDYNYYSRS) are disordered.

This sequence belongs to the major facilitator superfamily. Vesicular transporter family. Interacts with SEC14L1. As to expression, high expression in all major cholinergic cell groups, including peripheral postganglionic parasympathetic cells, preganglionic sympathetic and parasympathetic cells, ventral spinal cord and brainstem motoneurons, cell groups in the basal forebrain, the habenula and the corpus striatum. Weakly expressed in the cortex and hippocampus.

The protein localises to the cytoplasmic vesicle. The protein resides in the secretory vesicle. It localises to the synaptic vesicle membrane. The enzyme catalyses acetylcholine(out) + 2 H(+)(in) = acetylcholine(in) + 2 H(+)(out). It carries out the reaction choline(in) + 2 H(+)(out) = choline(out) + 2 H(+)(in). It catalyses the reaction serotonin(in) + 2 H(+)(out) = serotonin(out) + 2 H(+)(in). Its activity is regulated as follows. Potently inhibited by L-vesamicol. Functionally, electrogenic antiporter that exchanges one cholinergic neurotransmitter, acetylcholine or choline, with two intravesicular protons across the membrane of synaptic vesicles. Uses the electrochemical proton gradient established by the V-type proton-pump ATPase to store neurotransmitters inside the vesicles prior to their release via exocytosis. Determines cholinergic vesicular quantal size at presynaptic nerve terminals in developing neuro-muscular junctions with an impact on motor neuron differentiation and innervation pattern. Part of forebrain cholinergic system, regulates hippocampal synapse transmissions that underlie spatial memory formation. Can transport serotonin. The sequence is that of Vesicular acetylcholine transporter (Slc18a3) from Rattus norvegicus (Rat).